Here is a 359-residue protein sequence, read N- to C-terminus: B-cell differentiation antigen CD72 (359 aa).

Over 1-95 (MAEAITYADL…LPCRTTCLRY (95 aa)) the chain is Cytoplasmic. 2 positions are modified to phosphotyrosine; by LYN: tyrosine 7 and tyrosine 39. The helical; Signal-anchor for type II membrane protein transmembrane segment at 96 to 116 (LLLGLLLTCLLLGVTAICLGV) threads the bilayer. Topologically, residues 117-359 (RYLQVSQQLQ…CEMTAFRFPD (243 aa)) are extracellular. Asparagine 136 carries an N-linked (GlcNAc...) asparagine glycan. Residues 232–352 (CCPSGWIMHQ…RSSLPYICEM (121 aa)) form the C-type lectin domain. 3 disulfide bridges follow: cysteine 233–cysteine 244, cysteine 261–cysteine 350, and cysteine 325–cysteine 342.

In terms of assembly, homodimer; disulfide-linked. Associates with CD5. Interacts (tyrosine phosphorylated) with PTPN6/SHP-1. Post-translationally, phosphorylated upon engagement of the B-cell receptor, probably by LYN or SYK. Phosphorylation at Tyr-7 is important for interaction with PTPN6/SHP-1. Pre-B-cells and B-cells but not terminally differentiated plasma cells.

Its subcellular location is the membrane. In terms of biological role, co-receptor of B cell receptor (BCR) that plays both positive and negative roles on B-cell functions. Recognizes the Sm/ribonucleoprotein (RNP) self-antigen ligand, and coligation of CD72 and BCR inhibits BCR signaling. Mechanistically, ligand binding leads to the recruitment of PTPN6/SHP-1 to the BCR complex which is inhibitory to BCR signaling. Also acts as a ligand for CD5 and thereby plays a critical role in maintaining regulatory T and B-cell homeostasis. This Homo sapiens (Human) protein is B-cell differentiation antigen CD72 (CD72).